Here is a 447-residue protein sequence, read N- to C-terminus: MENLTLVSCSASSPKLLIGCNFTSSLKNPTGFSRRTPNIVLRCSKISASAQSQSPSSRPENTGEIVVVKQRSKAFASIFSSSRDQQTTSVASPSVPVPPPSSSTIGSPLFWIGVGVGLSALFSYVTSNLKKYAMQTAMKTMMNQMNTQNSQFNNSGFPSGSPFPFPFPPQTSPASSPFQSQSQSSGATVDVTATKVETPPSTKPKPTPAKDIEVDKPSVVLEASKEKKEEKNYAFEDISPEETTKESPFSNYAEVSETNSPKETRLFEDVLQNGAGPANGATASEVFQSLGGGKGGPGLSVEALEKMMEDPTVQKMVYPYLPEEMRNPETFKWMLKNPQYRQQLQDMLNNMSGSGEWDKRMTDTLKNFDLNSPEVKQQFNQIGLTPEEVISKIMENPDVAMAFQNPRVQAALMECSENPMNIMKYQNDKEVMDVFNKISQLFPGMTG.

The transit peptide at 1-43 (MENLTLVSCSASSPKLLIGCNFTSSLKNPTGFSRRTPNIVLRC) directs the protein to the chloroplast. Residues 44–76 (SKISASAQSQSPSSRPENTGEIVVVKQRSKAFA) constitute a chloroplast; inner membrane transit peptide. The Chloroplast intermembrane segment spans residues 77 to 104 (SIFSSSRDQQTTSVASPSVPVPPPSSST). A helical transmembrane segment spans residues 105–125 (IGSPLFWIGVGVGLSALFSYV). Residues 126–447 (TSNLKKYAMQ…ISQLFPGMTG (322 aa)) lie on the Stromal side of the membrane. The segment covering 148–160 (QNSQFNNSGFPSG) has biased composition (low complexity). Disordered regions lie at residues 148–214 (QNSQ…DIEV) and 231–261 (KNYA…TNSP). Over residues 161–171 (SPFPFPFPPQT) the composition is skewed to pro residues. A compositionally biased stretch (low complexity) spans 172-186 (SPASSPFQSQSQSSG). 2 STI1 domains span residues 310–344 (DPTV…RQQL) and 386–425 (PEEV…IMKY).

In terms of assembly, part of the Tic complex. Interacts with HSP93, TIC110 and LTD. In terms of tissue distribution, expressed in seedlings, flowers, leaves, stems and roots.

The protein localises to the plastid. Its subcellular location is the chloroplast inner membrane. In terms of biological role, involved in protein precursor import into chloroplasts. Part of the motor complex consisting of a co-chaperone (TIC40) and a chaperone (HSP93) associated with the import channel (TIC110). Causes the release of bound transit peptides from TIC110 and stimulates ATP hydrolysis by HSP93. Involved in reinsertion of proteins from the chloroplast stroma into the inner membrane. This Arabidopsis thaliana (Mouse-ear cress) protein is Protein TIC 40, chloroplastic (TIC40).